Here is a 488-residue protein sequence, read N- to C-terminus: V-type proton ATPase subunit B 1 (488 aa).

It belongs to the ATPase alpha/beta chains family. As to quaternary structure, V-ATPase is a heteromultimeric enzyme composed of a peripheral catalytic V1 complex (main components: subunits A, B, C, D, E, and F) attached to an integral membrane V0 proton pore complex (main component: the proteolipid protein).

Its function is as follows. Non-catalytic subunit of the peripheral V1 complex of vacuolar ATPase. V-ATPase is responsible for acidifying a variety of intracellular compartments in eukaryotic cells. This is V-type proton ATPase subunit B 1 from Gossypium hirsutum (Upland cotton).